The chain runs to 239 residues: tRNA (guanine-N(7)-)-methyltransferase (239 aa).

S-adenosyl-L-methionine-binding residues include Glu69, Glu94, Asp121, and Asp144. The active site involves Asp144. Residues Lys148, Asp180, and 217–220 (TNFE) each bind substrate.

Belongs to the class I-like SAM-binding methyltransferase superfamily. TrmB family. As to quaternary structure, monomer.

The catalysed reaction is guanosine(46) in tRNA + S-adenosyl-L-methionine = N(7)-methylguanosine(46) in tRNA + S-adenosyl-L-homocysteine. It functions in the pathway tRNA modification; N(7)-methylguanine-tRNA biosynthesis. Catalyzes the formation of N(7)-methylguanine at position 46 (m7G46) in tRNA. The protein is tRNA (guanine-N(7)-)-methyltransferase of Buchnera aphidicola subsp. Schizaphis graminum (strain Sg).